A 1357-amino-acid chain; its full sequence is DNA-directed RNA polymerase subunit beta (1357 aa).

It belongs to the RNA polymerase beta chain family. As to quaternary structure, the RNAP catalytic core consists of 2 alpha, 1 beta, 1 beta' and 1 omega subunit. When a sigma factor is associated with the core the holoenzyme is formed, which can initiate transcription.

The catalysed reaction is RNA(n) + a ribonucleoside 5'-triphosphate = RNA(n+1) + diphosphate. DNA-dependent RNA polymerase catalyzes the transcription of DNA into RNA using the four ribonucleoside triphosphates as substrates. In Pseudomonas fluorescens (strain SBW25), this protein is DNA-directed RNA polymerase subunit beta.